The chain runs to 1342 residues: DNA-directed RNA polymerase subunit beta (1342 aa).

This sequence belongs to the RNA polymerase beta chain family. As to quaternary structure, the RNAP catalytic core consists of 2 alpha, 1 beta, 1 beta' and 1 omega subunit. When a sigma factor is associated with the core the holoenzyme is formed, which can initiate transcription.

The enzyme catalyses RNA(n) + a ribonucleoside 5'-triphosphate = RNA(n+1) + diphosphate. Functionally, DNA-dependent RNA polymerase catalyzes the transcription of DNA into RNA using the four ribonucleoside triphosphates as substrates. This chain is DNA-directed RNA polymerase subunit beta, found in Pectobacterium atrosepticum (strain SCRI 1043 / ATCC BAA-672) (Erwinia carotovora subsp. atroseptica).